Consider the following 599-residue polypeptide: Elongation factor 4 (599 aa).

The tr-type G domain occupies 2–184; that stretch reads KNIRNFSIIA…RLVRDIPPPE (183 aa). GTP-binding positions include 14 to 19 and 131 to 134; these read DHGKST and NKID.

This sequence belongs to the TRAFAC class translation factor GTPase superfamily. Classic translation factor GTPase family. LepA subfamily.

The protein resides in the cell inner membrane. It carries out the reaction GTP + H2O = GDP + phosphate + H(+). In terms of biological role, required for accurate and efficient protein synthesis under certain stress conditions. May act as a fidelity factor of the translation reaction, by catalyzing a one-codon backward translocation of tRNAs on improperly translocated ribosomes. Back-translocation proceeds from a post-translocation (POST) complex to a pre-translocation (PRE) complex, thus giving elongation factor G a second chance to translocate the tRNAs correctly. Binds to ribosomes in a GTP-dependent manner. The chain is Elongation factor 4 from Escherichia coli (strain UTI89 / UPEC).